Consider the following 428-residue polypeptide: MPGIVLIGAQWGDEGKGKATDLIGTKVDYVARFNGGNNAGHSVVVGDESYALHLLPSGIINPNLTPVIGNGVVVDPEVLFEEIDGLESRGIDCSHLKVSEAAHIIAPYHRTLDKVTERFLGKHKIGTTGRGIGPAYADKINRVGIRVHDLFNADHLHDKVEASLHQKNQMLVKLYNRRPIDVDQTTEELLKLGERLKPYVANTGLILNKALDEGKTVLFEGAQATMLDVDHGTYPFVTSSNPTAGGACTGTGVGPTRITRVVGVSKAYVTRVGEGPFPTELLDESGEWLRQQGHEFGVTTGRPRRCGWFDAVVNRYASQVNGLTDIVLTKLDVLAGLKEIPICVAYDVDGERHDDMPTDQAAFAAAKPIYETMPGWDEDISNCHSFDELPATCQAYVKRLEELSGCRISAIGTGPQRDHVIQINSLVD.

Residues glycine 12–lysine 18 and glycine 40–serine 42 contribute to the GTP site. The active-site Proton acceptor is the aspartate 13. Residues aspartate 13 and glycine 40 each contribute to the Mg(2+) site. IMP-binding positions include aspartate 13–lysine 16, asparagine 38–histidine 41, threonine 128, arginine 142, glutamine 223, threonine 238, and arginine 302. The active-site Proton donor is histidine 41. Valine 298–arginine 304 is a binding site for substrate. Residues arginine 304, lysine 330 to aspartate 332, and glycine 412 to glycine 414 contribute to the GTP site.

The protein belongs to the adenylosuccinate synthetase family. Homodimer. Mg(2+) is required as a cofactor.

It localises to the cytoplasm. It carries out the reaction IMP + L-aspartate + GTP = N(6)-(1,2-dicarboxyethyl)-AMP + GDP + phosphate + 2 H(+). Its pathway is purine metabolism; AMP biosynthesis via de novo pathway; AMP from IMP: step 1/2. Functionally, plays an important role in the de novo pathway of purine nucleotide biosynthesis. Catalyzes the first committed step in the biosynthesis of AMP from IMP. This chain is Adenylosuccinate synthetase, found in Bifidobacterium longum (strain NCC 2705).